A 907-amino-acid chain; its full sequence is Protein translocase subunit SecA (907 aa).

ATP is bound by residues Gln87, Gly105–Thr109, and Asp512. Residues Gln834–Ile907 form a disordered region. 2 stretches are compositionally biased toward basic and acidic residues: residues Asp836–Arg853 and Glu873–Arg888. 4 residues coordinate Zn(2+): Cys892, Cys894, Cys903, and His904. Residues Lys898–Ile907 are compositionally biased toward basic residues.

The protein belongs to the SecA family. Monomer and homodimer. Part of the essential Sec protein translocation apparatus which comprises SecA, SecYEG and auxiliary proteins SecDF-YajC and YidC. Zn(2+) serves as cofactor.

It localises to the cell inner membrane. The protein resides in the cytoplasm. The enzyme catalyses ATP + H2O + cellular proteinSide 1 = ADP + phosphate + cellular proteinSide 2.. Part of the Sec protein translocase complex. Interacts with the SecYEG preprotein conducting channel. Has a central role in coupling the hydrolysis of ATP to the transfer of proteins into and across the cell membrane, serving both as a receptor for the preprotein-SecB complex and as an ATP-driven molecular motor driving the stepwise translocation of polypeptide chains across the membrane. The polypeptide is Protein translocase subunit SecA (Aliivibrio fischeri (strain ATCC 700601 / ES114) (Vibrio fischeri)).